The following is a 123-amino-acid chain: Ribonuclease P protein component (123 aa).

The protein belongs to the RnpA family. Consists of a catalytic RNA component (M1 or rnpB) and a protein subunit.

It catalyses the reaction Endonucleolytic cleavage of RNA, removing 5'-extranucleotides from tRNA precursor.. RNaseP catalyzes the removal of the 5'-leader sequence from pre-tRNA to produce the mature 5'-terminus. It can also cleave other RNA substrates such as 4.5S RNA. The protein component plays an auxiliary but essential role in vivo by binding to the 5'-leader sequence and broadening the substrate specificity of the ribozyme. This Streptococcus pneumoniae serotype 4 (strain ATCC BAA-334 / TIGR4) protein is Ribonuclease P protein component.